The chain runs to 63 residues: DNA-directed RNA polymerase 7 kDa subunit (63 aa).

This sequence belongs to the poxviridae DNA-directed RNA polymerase 7 kDa subunit family. As to quaternary structure, the DNA-dependent RNA polymerase used for intermediate and late genes expression consists of eight subunits 147 kDa, 133 kDa, 35 kDa, 30 kDa, 22 kDa, 19 kDa, 18 kDa and 7 kDa totalling more than 500 kDa in mass. The same holoenzyme, with the addition of the transcription-specificity factor RAP94, is used for early gene expression.

The protein resides in the virion. The enzyme catalyses RNA(n) + a ribonucleoside 5'-triphosphate = RNA(n+1) + diphosphate. Functionally, part of the DNA-dependent RNA polymerase which catalyzes the transcription of viral DNA into RNA using the four ribonucleoside triphosphates as substrates. Responsible for the transcription of early, intermediate and late genes. DNA-dependent RNA polymerase associates with the early transcription factor (ETF) thereby allowing the early genes transcription. Late transcription, and probably also intermediate transcription, require newly synthesized RNA polymerase. This chain is DNA-directed RNA polymerase 7 kDa subunit (RPO7), found in Homo sapiens (Human).